The sequence spans 156 residues: Small ribosomal subunit protein uS7 (156 aa).

It belongs to the universal ribosomal protein uS7 family. In terms of assembly, part of the 30S ribosomal subunit. Contacts proteins S9 and S11.

Functionally, one of the primary rRNA binding proteins, it binds directly to 16S rRNA where it nucleates assembly of the head domain of the 30S subunit. Is located at the subunit interface close to the decoding center, probably blocks exit of the E-site tRNA. The chain is Small ribosomal subunit protein uS7 from Anaeromyxobacter dehalogenans (strain 2CP-1 / ATCC BAA-258).